Reading from the N-terminus, the 509-residue chain is tRNA-2-methylthio-N(6)-dimethylallyladenosine synthase (509 aa).

A compositionally biased stretch (polar residues) spans 1–15 (MNEQQRLASQQVNSS). The tract at residues 1-26 (MNEQQRLASQQVNSSTKKEEKDYSKY) is disordered. Over residues 16 to 25 (TKKEEKDYSK) the composition is skewed to basic and acidic residues. The MTTase N-terminal domain maps to 66–184 (RKFYIRTYGC…LPYILKDAMF (119 aa)). [4Fe-4S] cluster-binding residues include C75, C111, C145, C221, C225, and C228. A Radical SAM core domain is found at 207–437 (RRGDIKAWVN…NALVNKLAIE (231 aa)). The region spanning 440-503 (NRYKGQIVEV…TWSLNGELVE (64 aa)) is the TRAM domain.

This sequence belongs to the methylthiotransferase family. MiaB subfamily. Monomer. [4Fe-4S] cluster is required as a cofactor.

It localises to the cytoplasm. It catalyses the reaction N(6)-dimethylallyladenosine(37) in tRNA + (sulfur carrier)-SH + AH2 + 2 S-adenosyl-L-methionine = 2-methylsulfanyl-N(6)-dimethylallyladenosine(37) in tRNA + (sulfur carrier)-H + 5'-deoxyadenosine + L-methionine + A + S-adenosyl-L-homocysteine + 2 H(+). Functionally, catalyzes the methylthiolation of N6-(dimethylallyl)adenosine (i(6)A), leading to the formation of 2-methylthio-N6-(dimethylallyl)adenosine (ms(2)i(6)A) at position 37 in tRNAs that read codons beginning with uridine. The polypeptide is tRNA-2-methylthio-N(6)-dimethylallyladenosine synthase (Bacillus cereus (strain AH187)).